Here is a 548-residue protein sequence, read N- to C-terminus: Chaperonin GroEL (548 aa).

Residues 29–32 (TLGP), 86–90 (DGTTT), Gly-413, 476–478 (NAL), and Asp-492 each bind ATP. A compositionally biased stretch (acidic residues) spans 522-531 (PDEDDNDDGD). The segment at 522-548 (PDEDDNDDGDMGGGAPGMGGMGGMPGM) is disordered. Residues 532–548 (MGGGAPGMGGMGGMPGM) show a composition bias toward gly residues.

The protein belongs to the chaperonin (HSP60) family. Forms a cylinder of 14 subunits composed of two heptameric rings stacked back-to-back. Interacts with the co-chaperonin GroES.

The protein resides in the cytoplasm. It catalyses the reaction ATP + H2O + a folded polypeptide = ADP + phosphate + an unfolded polypeptide.. In terms of biological role, together with its co-chaperonin GroES, plays an essential role in assisting protein folding. The GroEL-GroES system forms a nano-cage that allows encapsulation of the non-native substrate proteins and provides a physical environment optimized to promote and accelerate protein folding. In Natranaerobius thermophilus (strain ATCC BAA-1301 / DSM 18059 / JW/NM-WN-LF), this protein is Chaperonin GroEL.